The primary structure comprises 690 residues: Cysteine-rich receptor-like protein kinase 21 (690 aa).

The N-terminal stretch at 1-24 (MQKNKMVDLRAIFWFVVISSCAVA) is a signal peptide. A Gnk2-homologous 1 domain is found at 25 to 129 (APTCIQRSDF…CLVRYSNHLI (105 aa)). Residues 25 to 281 (APTCIQRSDF…KDGKNISTGS (257 aa)) are Extracellular-facing. 6 N-linked (GlcNAc...) asparagine glycosylation sites follow: N130, N148, N155, N220, N268, and N276. Residues 140–246 (AEYIEYKYNT…CFMRWDLQPF (107 aa)) form the Gnk2-homologous 2 domain. The chain crosses the membrane as a helical span at residues 282–302 (IVAIAVVSVVVSTVLLALGYA). Topologically, residues 303-690 (VSRRRKAYQS…DASITSVRPR (388 aa)) are cytoplasmic. The 278-residue stretch at 363–640 (FHKSNKLGHG…IFRMLTNVSI (278 aa)) folds into the Protein kinase domain. ATP is bound by residues 369-377 (LGHGGFGAV) and K391. At Y436 the chain carries Phosphotyrosine. D488 (proton acceptor) is an active-site residue. Position 492 is a phosphoserine (S492). T528 is modified (phosphothreonine). Phosphotyrosine is present on Y536.

This sequence belongs to the protein kinase superfamily. Ser/Thr protein kinase family. CRK subfamily.

It localises to the membrane. The catalysed reaction is L-seryl-[protein] + ATP = O-phospho-L-seryl-[protein] + ADP + H(+). The enzyme catalyses L-threonyl-[protein] + ATP = O-phospho-L-threonyl-[protein] + ADP + H(+). The protein is Cysteine-rich receptor-like protein kinase 21 (CRK21) of Arabidopsis thaliana (Mouse-ear cress).